We begin with the raw amino-acid sequence, 138 residues long: Ribulose bisphosphate carboxylase small subunit (138 aa).

It belongs to the RuBisCO small chain family. In terms of assembly, heterohexadecamer of 8 large and 8 small subunits.

The protein localises to the plastid. It localises to the chloroplast. RuBisCO catalyzes two reactions: the carboxylation of D-ribulose 1,5-bisphosphate, the primary event in carbon dioxide fixation, as well as the oxidative fragmentation of the pentose substrate in the photorespiration process. Both reactions occur simultaneously and in competition at the same active site. Although the small subunit is not catalytic it is essential for maximal activity. This is Ribulose bisphosphate carboxylase small subunit from Pyropia haitanensis (Red seaweed).